A 247-amino-acid polypeptide reads, in one-letter code: Uridylate kinase (247 aa).

11–14 (KASG) lines the ATP pocket. The involved in allosteric activation by GTP stretch occupies residues 19–24 (GKQGFG). Glycine 53 contributes to the UMP binding site. 2 residues coordinate ATP: glycine 54 and arginine 58. Residues aspartate 73 and 134 to 141 (TGNPFFTT) each bind UMP. The ATP site is built by threonine 161, glutamine 162, tyrosine 167, and aspartate 170.

It belongs to the UMP kinase family. In terms of assembly, homohexamer.

Its subcellular location is the cytoplasm. It catalyses the reaction UMP + ATP = UDP + ADP. It participates in pyrimidine metabolism; CTP biosynthesis via de novo pathway; UDP from UMP (UMPK route): step 1/1. Its activity is regulated as follows. Allosterically activated by GTP. Inhibited by UTP. Catalyzes the reversible phosphorylation of UMP to UDP. In Chelativorans sp. (strain BNC1), this protein is Uridylate kinase.